Reading from the N-terminus, the 237-residue chain is Large ribosomal subunit protein uL1 (237 aa).

This sequence belongs to the universal ribosomal protein uL1 family. In terms of assembly, part of the 50S ribosomal subunit.

Binds directly to 23S rRNA. The L1 stalk is quite mobile in the ribosome, and is involved in E site tRNA release. In terms of biological role, protein L1 is also a translational repressor protein, it controls the translation of the L11 operon by binding to its mRNA. This chain is Large ribosomal subunit protein uL1, found in Synechococcus elongatus (strain ATCC 33912 / PCC 7942 / FACHB-805) (Anacystis nidulans R2).